The following is a 105-amino-acid chain: UPF0145 protein lpp0255 (105 aa).

This sequence belongs to the UPF0145 family.

This is UPF0145 protein lpp0255 from Legionella pneumophila (strain Paris).